A 343-amino-acid chain; its full sequence is Glyceraldehyde-3-phosphate dehydrogenase 1 (343 aa).

Residues arginine 13–isoleucine 14, aspartate 35, arginine 79, and serine 121 each bind NAD(+). Residues serine 154 to threonine 156, threonine 185, threonine 214 to glycine 215, and arginine 237 each bind D-glyceraldehyde 3-phosphate. Cysteine 155 (nucleophile) is an active-site residue. An NAD(+)-binding site is contributed by asparagine 319.

Belongs to the glyceraldehyde-3-phosphate dehydrogenase family. In terms of assembly, homotetramer.

Its subcellular location is the cytoplasm. The catalysed reaction is D-glyceraldehyde 3-phosphate + phosphate + NAD(+) = (2R)-3-phospho-glyceroyl phosphate + NADH + H(+). The protein operates within carbohydrate degradation; glycolysis; pyruvate from D-glyceraldehyde 3-phosphate: step 1/5. Its function is as follows. Catalyzes the oxidative phosphorylation of glyceraldehyde 3-phosphate (G3P) to 1,3-bisphosphoglycerate (BPG) using the cofactor NAD. The first reaction step involves the formation of a hemiacetal intermediate between G3P and a cysteine residue, and this hemiacetal intermediate is then oxidized to a thioester, with concomitant reduction of NAD to NADH. The reduced NADH is then exchanged with the second NAD, and the thioester is attacked by a nucleophilic inorganic phosphate to produce BPG. The sequence is that of Glyceraldehyde-3-phosphate dehydrogenase 1 (gap1) from Trichormus variabilis (strain ATCC 29413 / PCC 7937) (Anabaena variabilis).